Consider the following 603-residue polypeptide: Bifunctional 3-dehydroquinate dehydratase/shikimate dehydrogenase, chloroplastic (603 aa).

The span at 1–10 (MAASSTNARL) shows a compositional bias: polar residues. The interval 1–22 (MAASSTNARLTNPPRLLSKPRL) is disordered. The N-terminal 66 residues, 1–66 (MAASSTNARL…VVFSDQRRRR (66 aa)), are a transit peptide targeting the chloroplast. A compositionally biased stretch (low complexity) spans 13-22 (PPRLLSKPRL). The segment at 96 to 313 (ICAPVMADSI…QPTIKDLLDL (218 aa)) is 3-dehydroquinate dehydratase. 3-dehydroshikimate is bound by residues Glu124, Arg126, and Arg155. His214 (proton acceptor; for 3-dehydroquinate dehydratase activity) is an active-site residue. 3-dehydroshikimate contacts are provided by Lys241, Arg279, Ser300, and Gln304. The Schiff-base intermediate with substrate; for 3-dehydroquinate dehydratase activity role is filled by Lys241. A shikimate dehydrogenase region spans residues 328-558 (IIGKPVSHSK…VYTPRITRLL (231 aa)). Residues Ser336, Ser338, Thr381, Lys385, Asn406, and Asp423 each coordinate shikimate. Residue Lys385 is the For shikimate dehydrogenase activity of the active site. Residue Asp423 is the For shikimate dehydrogenase activity of the active site. NADP(+) contacts are provided by Ala461, Gly463, Ala464, Asn483, Thr485, Arg488, Met525, and Ala548. Tyr550 provides a ligand contact to shikimate. Position 571 (Gly571) interacts with NADP(+). Gln578 and Gln582 together coordinate shikimate.

In the N-terminal section; belongs to the type-I 3-dehydroquinase family. It in the C-terminal section; belongs to the shikimate dehydrogenase family. In terms of assembly, monomer.

The protein localises to the plastid. It localises to the chloroplast. The catalysed reaction is 3-dehydroquinate = 3-dehydroshikimate + H2O. The enzyme catalyses shikimate + NADP(+) = 3-dehydroshikimate + NADPH + H(+). It participates in metabolic intermediate biosynthesis; chorismate biosynthesis; chorismate from D-erythrose 4-phosphate and phosphoenolpyruvate: step 3/7. It functions in the pathway metabolic intermediate biosynthesis; chorismate biosynthesis; chorismate from D-erythrose 4-phosphate and phosphoenolpyruvate: step 4/7. Its function is as follows. Bifunctional dehydroquinate dehydratase-shikimate dehydrogenase enzyme that catalyzes two steps in the chorismate biosynthesis pathway. The chain is Bifunctional 3-dehydroquinate dehydratase/shikimate dehydrogenase, chloroplastic from Arabidopsis thaliana (Mouse-ear cress).